A 414-amino-acid chain; its full sequence is Ankyrin repeat domain-containing protein 10 (414 aa).

5 ANK repeats span residues 18–47 (TLRF…RSDL), 54–83 (YGWT…SVNA), 88–117 (FAQT…NINK), 121–150 (VGET…QIDL), and 154–187 (SGLT…RYYS). Residues 310 to 332 (GVTSPSRHRIHTSNGTEEPEKAM) form a disordered region.

In Gallus gallus (Chicken), this protein is Ankyrin repeat domain-containing protein 10 (ANKRD10).